Here is a 253-residue protein sequence, read N- to C-terminus: 3-dehydroquinate dehydratase (253 aa).

Residues 46-48 (EWR) and arginine 82 contribute to the 3-dehydroquinate site. Residue histidine 143 is the Proton donor/acceptor of the active site. Lysine 170 acts as the Schiff-base intermediate with substrate in catalysis. 3 residues coordinate 3-dehydroquinate: arginine 213, serine 232, and glutamine 236.

The protein belongs to the type-I 3-dehydroquinase family. As to quaternary structure, homodimer.

The catalysed reaction is 3-dehydroquinate = 3-dehydroshikimate + H2O. It participates in metabolic intermediate biosynthesis; chorismate biosynthesis; chorismate from D-erythrose 4-phosphate and phosphoenolpyruvate: step 3/7. Its function is as follows. Involved in the third step of the chorismate pathway, which leads to the biosynthesis of aromatic amino acids. Catalyzes the cis-dehydration of 3-dehydroquinate (DHQ) and introduces the first double bond of the aromatic ring to yield 3-dehydroshikimate. This chain is 3-dehydroquinate dehydratase, found in Syntrophotalea carbinolica (strain DSM 2380 / NBRC 103641 / GraBd1) (Pelobacter carbinolicus).